A 221-amino-acid polypeptide reads, in one-letter code: uncharacterized protein (221 aa).

The region spanning 20–63 (DFDRAMLDFQAMFPSLSNSHIEYVLRKYDGDVSATINELLYDNT) is the CUE domain. The disordered stretch occupies residues 131 to 194 (EEKKKKSCSD…GPYIGEGEVK (64 aa)). Over residues 156 to 166 (KNSKNSKISVN) the composition is skewed to low complexity. Over residues 169–183 (KKLEPRRRSDEDRVP) the composition is skewed to basic and acidic residues.

This is an uncharacterized protein from Caenorhabditis elegans.